We begin with the raw amino-acid sequence, 537 residues long: Cytochrome P450 27C1 (537 aa).

A heme-binding site is contributed by cysteine 483.

It belongs to the cytochrome P450 family. Requires heme as cofactor. In terms of tissue distribution, expressed in the dorsal third of retinal pigment epithelium, but not in the ventral counterpart (at protein level).

The protein localises to the membrane. It catalyses the reaction all-trans-retinol + 2 reduced [adrenodoxin] + O2 + 2 H(+) = all-trans-3,4-didehydroretinol + 2 oxidized [adrenodoxin] + 2 H2O. Functionally, efficiently catalyzes the conversion of all-trans retinol (also called vitamin A1, the precursor of 11-cis retinal) to 3,4-didehydroretinol (also called vitamin A2, the precursor of 11-cis 3,4-didehydroretinal), also acts on all-trans retinal and all-trans retinoic acid. The replacement of 11-cis retinal chromophore in photopigments with 11-cis 3,4-didehydroretinal enhances sensitivity to long-wavelength light. This may improve vision in fresh water which is often turbid. This Aquarana catesbeiana (American bullfrog) protein is Cytochrome P450 27C1 (cyp27c1).